Consider the following 504-residue polypeptide: Chorion-specific transcription factor GCMb (504 aa).

Residues 19 to 174 constitute a DNA-binding region (GCM); the sequence is LTWDINDPQM…KSETEGRRSA (156 aa). 8 residues coordinate Zn(2+): Cys-81, Cys-87, Cys-91, Cys-118, Cys-121, Cys-130, His-157, and His-159. Basic and acidic residues-rich tracts occupy residues 155 to 172 and 188 to 203; these read GVHD…EGRR and RRSE…DIRG. A disordered region spans residues 155 to 203; the sequence is GVHDHPRPESKSETEGRRSALKRQMASFYQPQKRRSEEPEARSTQDIRG. Residues 379–393 form a C-terminal conserved inhibitory domain (CCID) region; that stretch reads LQTVITTTVAYQAYQ. The tract at residues 438–472 is disordered; the sequence is ASPSGRAPLKVPGDCQAPRPTLDFPQEADPSGTDG.

It localises to the nucleus. In terms of biological role, transcription factor that binds specific sequences on gene promoters and activate their transcription. Through the regulation of gene transcription, may play a role in parathyroid gland development. The chain is Chorion-specific transcription factor GCMb from Mus musculus (Mouse).